A 371-amino-acid chain; its full sequence is MATSAAFLKGDFKRTGKMELSDEQKSQMWINSVNSENKEALLAWVKETGIELVQINGQRKYGGPPPGWIGNAPVSGSEVFIGKIPQDIYEDKLIPLFQSVGKLYEFRLMMTFSGLNRGFAYARYISRRQAISAIMSLNGFEITKGCCIVVCRSTEKSELALDGLPGNFDENMLKNVLDEVTSGVSSISLHPSPTKESQVLAVVKYDSHRAAAMAKKTLCEGSPILPGLPLTVNWLKTDMRQKLRSTDKLQQTKDLSPLPLLYTDRPDLPKETLLSAVGCLNMLCQEMKLGRPVFLIKLFSVTSFGWIRFWYQVVIPTYPTPFCGYAWMIGENLELNEKYEHARQVVAMKILSALGYIPDFSLGDVTARNAL.

2 RRM domains span residues 85-163 (PQDI…ALDG) and 165-245 (PGNF…KLRS).

Its subcellular location is the nucleus. It localises to the cytoplasm. In terms of biological role, RNA-binding factor that positively regulates gene expression by prohibiting miRNA-mediated gene suppression. Relieves miRNA repression in germline cells. Prohibits the function of several miRNAs by blocking the accessibility of target mRNAs. Sequence-specific RNA-binding factor that binds to U-rich regions (URRs) in the 3'untranslated region (3'-UTR) of several mRNAs. Does not bind to miRNAs. May play a role during early embryonic survival. This chain is Dead end protein homolog 1 (dnd1), found in Xenopus laevis (African clawed frog).